The following is a 402-amino-acid chain: Zinc finger CCHC domain-containing protein 12 (402 aa).

A disordered region spans residues 1 to 20 (MASILSRLGSSRGQNSPLPP). The CCHC-type zinc finger occupies 346–363 (IHCSHCGEEGHSKETCDN). The segment at 383 to 402 (HAEERARGAPGEPIGLSEPQ) is disordered.

This sequence belongs to the ZCCHC12 family. As to quaternary structure, interacts with SMAD1 and CREB-binding protein (CBP). Forms a protein-DNA complex through its association with SMAD1. In embryonic brains expression is restricted to the ventral region of the forebrain, including the septum, amygdala, caudal putamen, and in the basal-forebrain cholinergic neurons. In adults, expressed in the brain, and at low levels in the testis.

In terms of biological role, transcriptional coactivator in the bone morphogenetic protein (BMP)-signaling pathway. It positively modulates BMP signaling by interacting with SMAD1 and associating with CBP in the transcription complex. It contributes to the BMP-induced enhancement of cholinergic-neuron-specific gene expression. This is Zinc finger CCHC domain-containing protein 12 (Zcchc12) from Mus musculus (Mouse).